The following is a 427-amino-acid chain: uncharacterized protein (427 aa).

3 helical membrane passes run 10–30, 43–63, and 71–91; these read LAYL…AGFW, KIIS…SKLA, and IFEI…SFIS. Thr199 is modified (phosphothreonine). Position 234 is a phosphoserine (Ser234). A run of 5 helical transmembrane segments spans residues 253-273, 288-308, 327-347, 358-378, and 397-417; these read NLNP…IGPL, FAEA…VVLG, LLIG…LPII, ILDD…PPAI, and ILFW…VSGA.

This sequence belongs to the auxin efflux carrier (TC 2.A.69) family.

Its subcellular location is the membrane. This is an uncharacterized protein from Saccharomyces cerevisiae (strain ATCC 204508 / S288c) (Baker's yeast).